The sequence spans 141 residues: Large ribosomal subunit protein uL11 (141 aa).

The protein belongs to the universal ribosomal protein uL11 family. Part of the ribosomal stalk of the 50S ribosomal subunit. Interacts with L10 and the large rRNA to form the base of the stalk. L10 forms an elongated spine to which L12 dimers bind in a sequential fashion forming a multimeric L10(L12)X complex. One or more lysine residues are methylated.

Functionally, forms part of the ribosomal stalk which helps the ribosome interact with GTP-bound translation factors. In Chlamydia pneumoniae (Chlamydophila pneumoniae), this protein is Large ribosomal subunit protein uL11.